A 296-amino-acid polypeptide reads, in one-letter code: Bifunctional protein FolD (296 aa).

NADP(+)-binding positions include 166 to 168, serine 195, and isoleucine 236; that span reads GRS.

It belongs to the tetrahydrofolate dehydrogenase/cyclohydrolase family. As to quaternary structure, homodimer.

The enzyme catalyses (6R)-5,10-methylene-5,6,7,8-tetrahydrofolate + NADP(+) = (6R)-5,10-methenyltetrahydrofolate + NADPH. It carries out the reaction (6R)-5,10-methenyltetrahydrofolate + H2O = (6R)-10-formyltetrahydrofolate + H(+). It participates in one-carbon metabolism; tetrahydrofolate interconversion. Functionally, catalyzes the oxidation of 5,10-methylenetetrahydrofolate to 5,10-methenyltetrahydrofolate and then the hydrolysis of 5,10-methenyltetrahydrofolate to 10-formyltetrahydrofolate. In Chlorobium limicola (strain DSM 245 / NBRC 103803 / 6330), this protein is Bifunctional protein FolD.